A 376-amino-acid chain; its full sequence is Glucose-1-phosphate adenylyltransferase (376 aa).

Alpha-D-glucose 1-phosphate-binding positions include Y101, G166, 181 to 182 (EK), and S192.

This sequence belongs to the bacterial/plant glucose-1-phosphate adenylyltransferase family. Homotetramer.

The catalysed reaction is alpha-D-glucose 1-phosphate + ATP + H(+) = ADP-alpha-D-glucose + diphosphate. Its pathway is glycan biosynthesis; glycogen biosynthesis. Its function is as follows. Involved in the biosynthesis of ADP-glucose, a building block required for the elongation reactions to produce glycogen. Catalyzes the reaction between ATP and alpha-D-glucose 1-phosphate (G1P) to produce pyrophosphate and ADP-Glc. The sequence is that of Glucose-1-phosphate adenylyltransferase from Bacillus mycoides (strain KBAB4) (Bacillus weihenstephanensis).